A 625-amino-acid chain; its full sequence is Alpha-amylase 1 (625 aa).

The first 22 residues, 1-22 (MGFSKIALFSLFALFGLPTSLA), serve as a signal peptide directing secretion. Cys51 and Cys59 are oxidised to a cystine. Residue Trp105 participates in substrate binding. Residue Asn143 participates in Ca(2+) binding. 3 N-linked (GlcNAc...) asparagine glycosylation sites follow: Asn153, Asn163, and Asn180. An intrachain disulfide couples Cys172 to Cys187. The Ca(2+) site is built by Glu185 and Asp198. Arg227 lines the substrate pocket. Asp229 provides a ligand contact to Ca(2+). Residue Asp229 is the Nucleophile of the active site. Substrate is bound at residue 232–233 (KQ). A glycan (N-linked (GlcNAc...) asparagine) is linked at Asn241. Glu253 contacts Ca(2+). The Proton donor role is filled by Glu253. Asn260 and Asn286 each carry an N-linked (GlcNAc...) asparagine glycan. Cys263 and Cys306 are oxidised to a cystine. Substrate is bound at residue Asp322. Asn331 is a glycosylation site (N-linked (GlcNAc...) asparagine). Arg370 is a binding site for substrate. 2 N-linked (GlcNAc...) asparagine glycosylation sites follow: Asn440 and Asn461. Residues 526–579 (SATSSSKSSSSSSSRSGSSSSSSSRSGSTSSSGSSHTITSTSQSVHTSGSSTST) form a disordered region. The GPI-anchor amidated serine moiety is linked to residue Ser603. Positions 604–625 (SANAVRVSILGVAAFIAIVLFI) are cleaved as a propeptide — removed in mature form.

This sequence belongs to the glycosyl hydrolase 13 family. The cofactor is Ca(2+).

It localises to the cell membrane. It catalyses the reaction Endohydrolysis of (1-&gt;4)-alpha-D-glucosidic linkages in polysaccharides containing three or more (1-&gt;4)-alpha-linked D-glucose units.. The protein is Alpha-amylase 1 (aah1) of Schizosaccharomyces pombe (strain 972 / ATCC 24843) (Fission yeast).